A 254-amino-acid chain; its full sequence is 3-deoxy-manno-octulosonate cytidylyltransferase (254 aa).

The protein belongs to the KdsB family.

The protein resides in the cytoplasm. The enzyme catalyses 3-deoxy-alpha-D-manno-oct-2-ulosonate + CTP = CMP-3-deoxy-beta-D-manno-octulosonate + diphosphate. It participates in nucleotide-sugar biosynthesis; CMP-3-deoxy-D-manno-octulosonate biosynthesis; CMP-3-deoxy-D-manno-octulosonate from 3-deoxy-D-manno-octulosonate and CTP: step 1/1. The protein operates within bacterial outer membrane biogenesis; lipopolysaccharide biosynthesis. In terms of biological role, activates KDO (a required 8-carbon sugar) for incorporation into bacterial lipopolysaccharide in Gram-negative bacteria. The polypeptide is 3-deoxy-manno-octulosonate cytidylyltransferase (Porphyromonas gingivalis (strain ATCC BAA-308 / W83)).